A 438-amino-acid chain; its full sequence is tRNA-dihydrouridine(16/17) synthase [NAD(P)(+)]-like (438 aa).

Residues 23-25 and Gln-79 contribute to the FMN site; that span reads PMV. Cys-108 serves as the catalytic Proton donor. FMN-binding positions include Lys-147, His-175, 208-210, and 232-233; these read NGN and AE. The disordered stretch occupies residues 343–387; that stretch reads GPKEGSKENSSGRSKRALEEEEGSMEGLSKNKLKKQLRNPHKTFD. The span at 373-383 shows a compositional bias: basic residues; sequence NKLKKQLRNPH.

This sequence belongs to the Dus family. Dus1 subfamily. It depends on FMN as a cofactor.

Its subcellular location is the cytoplasm. The protein localises to the nucleus. It catalyses the reaction 5,6-dihydrouridine(16) in tRNA + NADP(+) = uridine(16) in tRNA + NADPH + H(+). It carries out the reaction 5,6-dihydrouridine(16) in tRNA + NAD(+) = uridine(16) in tRNA + NADH + H(+). The catalysed reaction is 5,6-dihydrouridine(17) in tRNA + NAD(+) = uridine(17) in tRNA + NADH + H(+). The enzyme catalyses 5,6-dihydrouridine(17) in tRNA + NADP(+) = uridine(17) in tRNA + NADPH + H(+). In terms of biological role, catalyzes the synthesis of dihydrouridine, a modified base found in the D-loop of most tRNAs. Specifically modifies U16 and U17 in cytoplasmic tRNAs. Affects the level of some mature tRNA and thereby the total cellular translation. This chain is tRNA-dihydrouridine(16/17) synthase [NAD(P)(+)]-like (Dus1l), found in Rattus norvegicus (Rat).